Here is a 386-residue protein sequence, read N- to C-terminus: Transcription factor GTE1 (386 aa).

Disordered stretches follow at residues 66–106 (GAAQ…KHVS) and 340–386 (ANKS…AKKA). Positions 68–78 (AQTNTSKSNSG) are enriched in polar residues. The region spanning 105–211 (VSSPDLMRQF…EKFEEKWLLI (107 aa)) is the Bromo domain. Residues 263-344 (RESVVQRCRK…EALKAANKSS (82 aa)) form the NET domain. The segment covering 345–358 (GGTNAQNNNNTGTG) has biased composition (low complexity).

As to expression, barely detectable in stems, leaves, siliques, and dry seeds, but was present at considerable levels in roots, flowers and imbibited seeds.

The protein resides in the nucleus. Its function is as follows. Transcription activator that plays a role in the promotion of seed germination by both negatively and positively regulating the abscisic acid (ABA) and phytochrome A (phyA) transduction pathways, respectively. The sequence is that of Transcription factor GTE1 (GTE1) from Arabidopsis thaliana (Mouse-ear cress).